The sequence spans 217 residues: Endo-1,4-beta-xylanase (217 aa).

Positions 1 to 17 are cleaved as a signal peptide; the sequence is MQFLIPVVILCVSLVDS. The GH11 domain maps to 20-217; that stretch reads VLYNNEIGFN…SSGFADITVS (198 aa). N-linked (GlcNAc...) asparagine glycosylation is found at Asn-56 and Asn-80. Glu-107 serves as the catalytic Nucleophile. Glu-204 acts as the Proton donor in catalysis.

Belongs to the glycosyl hydrolase 11 (cellulase G) family. In terms of tissue distribution, expressed in larval carcasses and gut, and adult gut.

It localises to the secreted. It catalyses the reaction Endohydrolysis of (1-&gt;4)-beta-D-xylosidic linkages in xylans.. The protein operates within glycan degradation; xylan degradation. The chain is Endo-1,4-beta-xylanase from Phaedon cochleariae (Mustard beetle).